We begin with the raw amino-acid sequence, 538 residues long: Glutamyl-tRNA(Gln) amidotransferase subunit B, mitochondrial (538 aa).

This sequence belongs to the GatB/GatE family. GatB subfamily. As to quaternary structure, subunit of the heterotrimeric GatCAB amidotransferase (AdT) complex, composed of A, B and C subunits.

The protein resides in the mitochondrion. The catalysed reaction is L-glutamyl-tRNA(Gln) + L-glutamine + ATP + H2O = L-glutaminyl-tRNA(Gln) + L-glutamate + ADP + phosphate + H(+). In terms of biological role, allows the formation of correctly charged Gln-tRNA(Gln) through the transamidation of misacylated Glu-tRNA(Gln) in the mitochondria. The reaction takes place in the presence of glutamine and ATP through an activated gamma-phospho-Glu-tRNA(Gln). In Dictyostelium discoideum (Social amoeba), this protein is Glutamyl-tRNA(Gln) amidotransferase subunit B, mitochondrial.